Here is a 648-residue protein sequence, read N- to C-terminus: Threonine--tRNA ligase (648 aa).

Residues 1-61 (MITITFPDGA…EEDGSIEIIT (61 aa)) enclose the TGS domain. The interval 242 to 540 (DHRKLGKELD…LIETYKGAFP (299 aa)) is catalytic. Zn(2+) is bound by residues Cys-336, His-387, and His-517.

It belongs to the class-II aminoacyl-tRNA synthetase family. In terms of assembly, homodimer. It depends on Zn(2+) as a cofactor.

Its subcellular location is the cytoplasm. It carries out the reaction tRNA(Thr) + L-threonine + ATP = L-threonyl-tRNA(Thr) + AMP + diphosphate + H(+). Its function is as follows. Catalyzes the attachment of threonine to tRNA(Thr) in a two-step reaction: L-threonine is first activated by ATP to form Thr-AMP and then transferred to the acceptor end of tRNA(Thr). Also edits incorrectly charged L-seryl-tRNA(Thr). The chain is Threonine--tRNA ligase from Streptococcus equi subsp. zooepidemicus (strain H70).